The primary structure comprises 349 residues: Phenylalanine--tRNA ligase alpha subunit (349 aa).

Glutamate 258 provides a ligand contact to Mg(2+).

The protein belongs to the class-II aminoacyl-tRNA synthetase family. Phe-tRNA synthetase alpha subunit type 1 subfamily. As to quaternary structure, tetramer of two alpha and two beta subunits. The cofactor is Mg(2+).

The protein localises to the cytoplasm. The enzyme catalyses tRNA(Phe) + L-phenylalanine + ATP = L-phenylalanyl-tRNA(Phe) + AMP + diphosphate + H(+). The polypeptide is Phenylalanine--tRNA ligase alpha subunit (Rickettsia akari (strain Hartford)).